The following is a 798-amino-acid chain: Phenylalanine--tRNA ligase beta subunit (798 aa).

The 111-residue stretch at 38-148 (IGNYEKVVVG…PEAPVGEKIE (111 aa)) folds into the tRNA-binding domain. In terms of domain architecture, B5 spans 400-475 (FTPKVIAVSL…RYLGYNNFPD (76 aa)). 4 residues coordinate Mg(2+): Asp453, Asp459, Glu462, and Glu463. Positions 703-796 (SPYPEVKRDI…LEAKTGAKLR (94 aa)) constitute an FDX-ACB domain.

This sequence belongs to the phenylalanyl-tRNA synthetase beta subunit family. Type 1 subfamily. Tetramer of two alpha and two beta subunits. Requires Mg(2+) as cofactor.

It localises to the cytoplasm. It carries out the reaction tRNA(Phe) + L-phenylalanine + ATP = L-phenylalanyl-tRNA(Phe) + AMP + diphosphate + H(+). This Carboxydothermus hydrogenoformans (strain ATCC BAA-161 / DSM 6008 / Z-2901) protein is Phenylalanine--tRNA ligase beta subunit.